The primary structure comprises 217 residues: Uracil-DNA glycosylase (217 aa).

Asp-62 (proton acceptor) is an active-site residue.

It belongs to the uracil-DNA glycosylase (UDG) superfamily. UNG family.

Its subcellular location is the cytoplasm. The catalysed reaction is Hydrolyzes single-stranded DNA or mismatched double-stranded DNA and polynucleotides, releasing free uracil.. In terms of biological role, excises uracil residues from the DNA which can arise as a result of misincorporation of dUMP residues by DNA polymerase or due to deamination of cytosine. The chain is Uracil-DNA glycosylase from Streptococcus pneumoniae (strain P1031).